Reading from the N-terminus, the 395-residue chain is Argininosuccinate synthase (395 aa).

ATP-binding positions include 10–18 (AYSGGLDTS) and alanine 37. L-citrulline is bound by residues tyrosine 88 and serine 93. Glycine 118 is a binding site for ATP. L-aspartate contacts are provided by threonine 120, asparagine 124, and aspartate 125. Asparagine 124 contributes to the L-citrulline binding site. The L-citrulline site is built by arginine 128, serine 179, serine 188, glutamate 264, and tyrosine 276.

This sequence belongs to the argininosuccinate synthase family. Type 1 subfamily. As to quaternary structure, homotetramer.

It localises to the cytoplasm. It carries out the reaction L-citrulline + L-aspartate + ATP = 2-(N(omega)-L-arginino)succinate + AMP + diphosphate + H(+). The protein operates within amino-acid biosynthesis; L-arginine biosynthesis; L-arginine from L-ornithine and carbamoyl phosphate: step 2/3. The polypeptide is Argininosuccinate synthase (Pelagibacter ubique (strain HTCC1062)).